Here is an 874-residue protein sequence, read N- to C-terminus: MSIPSILRKETLKKKDKNIDLQENNINDLVVSASRVIAPLWPISTFAAHHPWMGLEKQSFEQVANWLKEARNVDIYPSASMIHSAKAKGEIEESFLQIALSRWLDSQSFHMPRETAERFCQEALKLERLPSSLLSSPELNKLAEEINYVNTGSMKDSSMQPISSLIENQNGDNLSDILNYHIIKWCKLYLDDAGTSWAMPNREKGFYRAWQHLITFDPALSKTERKVLKDWPEDALIALTKALSELGISESNMQAYLEGHLLSLPGWAGMIRWRSQQSIEEQELLIEYLAVRLSMELAIVKPYLPLKNQKAEKKVSIVPLIASWIYWGDISIEKWLQMSATEQSELLAFAYRFDENTRKKLWLEAWEQTHAEQLREKIASKQRATNDKKRVVAQLAFCIDVRSEPFRRHLEKLGPFETFGIAGFFGLPIATTELGSNDSHPSLPVILKPKHQIKELTDENECKSYEQRKMVGSSVRYTFKTMKQNVLTSMLLPEVSGPLLGLQMVTRSFVPRRVGGFIRNLRKNMLQKPDTTFSLNHVHDTNCEIPIGFTKEEKVNYVRQALKMVGLTEGFAPLVVMCGHSSQSTNNPYAAALECGACGGAAGGFNARVFATLCNLPEVREALSAEGIKIPDDTIFAAAEHKTTVDELEWIYVPELSEIAQEAFDCIEAIMPNVSQHANRERLMQLPHFKTKIKNPSKEAHRFAEDWSEIRPEWGLARNASFIIGQRELTQECDLEGRAFLHNYDWKQDESGDILANIIAGPGTVAQWINLQYYASTVAPHYYGSGNKATQTVTAGLGVMQGNASDLLPGLPWQSVMQSDRETYHSPLRLLIVIQAPTKYIERLLNNNFTFREKVQNGWVRLASVDPEGRWKNW.

Zn(2+) contacts are provided by C398, D400, H580, and C595.

Belongs to the inorganic carbon transporter (TC 9.A.2) DabA family. In terms of assembly, forms a complex with DabB. The cofactor is Zn(2+).

Its subcellular location is the cell membrane. Its function is as follows. Part of an energy-coupled inorganic carbon pump. This Bacillus cereus (strain AH820) protein is Probable inorganic carbon transporter subunit DabA.